A 315-amino-acid chain; its full sequence is Ribose-phosphate pyrophosphokinase (315 aa).

Residues 37–39 (DGE) and 96–97 (RQ) each bind ATP. 2 residues coordinate Mg(2+): histidine 131 and aspartate 170. Lysine 194 is a catalytic residue. D-ribose 5-phosphate-binding positions include arginine 196, aspartate 220, and 224 to 228 (DTGGT).

Belongs to the ribose-phosphate pyrophosphokinase family. Class I subfamily. As to quaternary structure, homohexamer. Mg(2+) is required as a cofactor.

Its subcellular location is the cytoplasm. The enzyme catalyses D-ribose 5-phosphate + ATP = 5-phospho-alpha-D-ribose 1-diphosphate + AMP + H(+). The protein operates within metabolic intermediate biosynthesis; 5-phospho-alpha-D-ribose 1-diphosphate biosynthesis; 5-phospho-alpha-D-ribose 1-diphosphate from D-ribose 5-phosphate (route I): step 1/1. Its function is as follows. Involved in the biosynthesis of the central metabolite phospho-alpha-D-ribosyl-1-pyrophosphate (PRPP) via the transfer of pyrophosphoryl group from ATP to 1-hydroxyl of ribose-5-phosphate (Rib-5-P). This Escherichia coli O6:H1 (strain CFT073 / ATCC 700928 / UPEC) protein is Ribose-phosphate pyrophosphokinase.